The following is a 607-amino-acid chain: Autophagy-related protein 22-2 (607 aa).

A disordered region spans residues 9–31 (FQSPSPDEGVQQRPPRYVGEDTT). A helical transmembrane segment spans residues 44–64 (YGIAAEVFAVCGVGSFLPLTL). Asn88 and Asn91 each carry an N-linked (GlcNAc...) asparagine glycan. The next 3 helical transmembrane spans lie at 111-131 (SFAMYTFSLAVLIQALTLISF), 143-160 (TLLMVFGFAGALASMLFV), and 161-178 (FIAPPLFVIGSILVVVGV). The disordered stretch occupies residues 203–263 (QEGKADDGTE…GMGTKAPLSS (61 aa)). Residue Asn235 is glycosylated (N-linked (GlcNAc...) asparagine). The next 8 membrane-spanning stretches (helical) occupy residues 277-297 (GIGLGYCAAVFVQIISIIMLL), 310-330 (TLPMRFVLLLVGIWWGAFTLV), 381-401 (VLIFLVAWFLLSDAMATVSGT), 415-435 (PLIGLLSITATLSGMTGAFLW), 450-470 (IILCIALFEMIPLYGLLAYIP), 484-504 (WEIFPLAIVHGVVSGGLASYC), 521-543 (YALYAATDKGSSFIGPAIVGGIV), and 552-572 (GFFFMAILIVLPIPLVWMVNA). The interval 585-607 (TLGKSHGGPAEDAQEAEGLLARE) is disordered.

This sequence belongs to the ATG22 family.

The protein localises to the vacuole membrane. In terms of biological role, vacuolar effluxer which mediate the efflux of amino acids resulting from autophagic degradation. The release of autophagic amino acids allows the maintenance of protein synthesis and viability during nitrogen starvation. The protein is Autophagy-related protein 22-2 (atg22-2) of Penicillium rubens (strain ATCC 28089 / DSM 1075 / NRRL 1951 / Wisconsin 54-1255) (Penicillium chrysogenum).